The following is a 296-amino-acid chain: Protease HtpX homolog (296 aa).

The next 2 membrane-spanning stretches (helical) occupy residues 14-34 (VVLLIVFFCLLAAIGAAVGYL) and 39-59 (YQFGLVLALIIGVIYAVSMIF). Zn(2+) is bound at residue His-143. The active site involves Glu-144. Zn(2+) is bound at residue His-147. Helical transmembrane passes span 158–178 (IAVALASAVTLISSIGSRMLF) and 195–215 (ILVLIFSILSLILAPLAASLV). Glu-224 contributes to the Zn(2+) binding site.

Belongs to the peptidase M48B family. It depends on Zn(2+) as a cofactor.

Its subcellular location is the cell membrane. In Streptococcus agalactiae serotype III (strain NEM316), this protein is Protease HtpX homolog.